The following is a 740-amino-acid chain: Dipeptidyl peptidase family member 6 (740 aa).

Met1 is a topological domain (cytoplasmic). The helical; Signal-anchor for type II membrane protein transmembrane segment at 2–22 (LFLPILILNLLIITHAIDIIP) threads the bilayer. Topologically, residues 23 to 740 (REVLFQDPKY…VMNRIFPVQG (718 aa)) are lumenal. Residues Asn108, Asn308, and Asn506 are each glycosylated (N-linked (GlcNAc...) asparagine). Residues Ser516, Asp604, and His636 each act as charge relay system in the active site. An intrachain disulfide couples Cys535 to Cys658. An N-linked (GlcNAc...) asparagine glycan is attached at Asn672.

It belongs to the peptidase S9B family. DPPIV subfamily.

It is found in the cell membrane. Its function is as follows. Removes N-terminal dipeptides sequentially from polypeptides. Essential for control of distal tip cell migration. This Caenorhabditis elegans protein is Dipeptidyl peptidase family member 6 (dpf-6).